Here is a 164-residue protein sequence, read N- to C-terminus: Ubiquitin-fold modifier-conjugating enzyme 1 (164 aa).

Cys116 acts as the Glycyl thioester intermediate in catalysis.

The protein belongs to the ubiquitin-conjugating enzyme family. UFC1 subfamily.

Its function is as follows. E2-like enzyme which forms an intermediate with UFM1 via a thioester linkage. This is Ubiquitin-fold modifier-conjugating enzyme 1 from Drosophila sechellia (Fruit fly).